We begin with the raw amino-acid sequence, 124 residues long: Large ribosomal subunit protein eL33 (124 aa).

Position 2 is an N-acetylalanine (alanine 2).

This sequence belongs to the eukaryotic ribosomal protein eL33 family.

This is Large ribosomal subunit protein eL33 from Caenorhabditis elegans.